The following is a 364-amino-acid chain: Oxidized polyvinyl alcohol hydrolase (364 aa).

An N-terminal signal peptide occupies residues 1 to 34 (MFKPVVKSRSSRSFCYLAGCLAMVAATLSSTAQA). Active-site charge relay system residues include Ser190 and Ser293.

This sequence belongs to the peptidase S9A family. In terms of assembly, monomer.

Its subcellular location is the periplasm. The enzyme catalyses nonane-4,6-dione + H2O = pentan-2-one + butanoate + H(+). Its function is as follows. Catalyzes the hydrolysis of 4,6-nonanedione, a beta-diketone compound. Also mediates hydrolysis of oxidized polyvinyl alcohol (PVA) in the second step in the degradation of polyvinyl alcohol. Not active toward the monoketone structure. This chain is Oxidized polyvinyl alcohol hydrolase (oph), found in Sphingopyxis sp. (strain 113P3).